A 362-amino-acid polypeptide reads, in one-letter code: Chorismate synthase (362 aa).

Arg48 contacts NADP(+). FMN contacts are provided by residues 131–133, 243–244, Gly288, 303–307, and Arg329; these read RAS, NA, and KPTSS.

It belongs to the chorismate synthase family. In terms of assembly, homotetramer. FMNH2 is required as a cofactor.

It catalyses the reaction 5-O-(1-carboxyvinyl)-3-phosphoshikimate = chorismate + phosphate. It functions in the pathway metabolic intermediate biosynthesis; chorismate biosynthesis; chorismate from D-erythrose 4-phosphate and phosphoenolpyruvate: step 7/7. In terms of biological role, catalyzes the anti-1,4-elimination of the C-3 phosphate and the C-6 proR hydrogen from 5-enolpyruvylshikimate-3-phosphate (EPSP) to yield chorismate, which is the branch point compound that serves as the starting substrate for the three terminal pathways of aromatic amino acid biosynthesis. This reaction introduces a second double bond into the aromatic ring system. This is Chorismate synthase from Bartonella tribocorum (strain CIP 105476 / IBS 506).